We begin with the raw amino-acid sequence, 122 residues long: NADPH-dependent 7-cyano-7-deazaguanine reductase (122 aa).

Cys-34 acts as the Thioimide intermediate in catalysis. The active-site Proton donor is Asp-41. Substrate-binding positions include 56 to 58 (VEL) and 75 to 76 (HE).

Belongs to the GTP cyclohydrolase I family. QueF type 1 subfamily.

Its subcellular location is the cytoplasm. It carries out the reaction 7-aminomethyl-7-carbaguanine + 2 NADP(+) = 7-cyano-7-deazaguanine + 2 NADPH + 3 H(+). It functions in the pathway tRNA modification; tRNA-queuosine biosynthesis. Functionally, catalyzes the NADPH-dependent reduction of 7-cyano-7-deazaguanine (preQ0) to 7-aminomethyl-7-deazaguanine (preQ1). This is NADPH-dependent 7-cyano-7-deazaguanine reductase from Anaeromyxobacter dehalogenans (strain 2CP-C).